Reading from the N-terminus, the 274-residue chain is Formamidopyrimidine-DNA glycosylase (274 aa).

Pro2 serves as the catalytic Schiff-base intermediate with DNA. The active-site Proton donor is the Glu3. Lys59 functions as the Proton donor; for beta-elimination activity in the catalytic mechanism. The DNA site is built by His93, Arg112, and Arg155. Residues 240–274 (QVYGRTGRPCPRCGQPLERVRLGGRSTHFCPRCQV) form an FPG-type zinc finger. Catalysis depends on Arg264, which acts as the Proton donor; for delta-elimination activity.

It belongs to the FPG family. As to quaternary structure, monomer. Zn(2+) serves as cofactor.

It carries out the reaction Hydrolysis of DNA containing ring-opened 7-methylguanine residues, releasing 2,6-diamino-4-hydroxy-5-(N-methyl)formamidopyrimidine.. It catalyses the reaction 2'-deoxyribonucleotide-(2'-deoxyribose 5'-phosphate)-2'-deoxyribonucleotide-DNA = a 3'-end 2'-deoxyribonucleotide-(2,3-dehydro-2,3-deoxyribose 5'-phosphate)-DNA + a 5'-end 5'-phospho-2'-deoxyribonucleoside-DNA + H(+). Involved in base excision repair of DNA damaged by oxidation or by mutagenic agents. Acts as a DNA glycosylase that recognizes and removes damaged bases. Has a preference for oxidized purines, such as 7,8-dihydro-8-oxoguanine (8-oxoG). Has AP (apurinic/apyrimidinic) lyase activity and introduces nicks in the DNA strand. Cleaves the DNA backbone by beta-delta elimination to generate a single-strand break at the site of the removed base with both 3'- and 5'-phosphates. The protein is Formamidopyrimidine-DNA glycosylase of Moorella thermoacetica (strain ATCC 39073 / JCM 9320).